Consider the following 194-residue polypeptide: Probable GTP-binding protein EngB (194 aa).

One can recognise an EngB-type G domain in the interval 22 to 194 (DLPEYALAGR…AWQFIKEGME (173 aa)). Residues 30–37 (GRSNVGKS), 57–61 (GKTQT), 75–78 (DVPG), 142–145 (TKAD), and 174–176 (FSS) contribute to the GTP site. Residues serine 37 and threonine 59 each contribute to the Mg(2+) site.

The protein belongs to the TRAFAC class TrmE-Era-EngA-EngB-Septin-like GTPase superfamily. EngB GTPase family. The cofactor is Mg(2+).

Functionally, necessary for normal cell division and for the maintenance of normal septation. This chain is Probable GTP-binding protein EngB, found in Listeria monocytogenes serovar 1/2a (strain ATCC BAA-679 / EGD-e).